The sequence spans 171 residues: Spiderine-2a (171 aa).

A signal peptide spans 1–18; the sequence is MKFALVLLGVCAFYLVNA. The propeptide at 19–58 is removed in mature form; the sequence is TGDLETELEASELQELQEALDLIAETPLESLEAEELEEAR. Residues 59–104 are linear cationic cytotoxin domain; sequence KFKLPKINWGKLASKAKDVYKKGQKLAKNKNVKKALKYGKQLAENL. In terms of domain architecture, Oxytoxin-type inhibitor cystine knot (ICK) spans 118–171; sequence NNKCWAIGTRCTDDCDCCPEHHCHCPAKSWTFGLIPCSCQVTESDKVNKCPPAE. 5 cysteine pairs are disulfide-bonded: Cys-121–Cys-135, Cys-128–Cys-140, Cys-132–Cys-167, Cys-134–Cys-156, and Cys-142–Cys-154.

In terms of processing, disulfide bonds. As to expression, expressed by the venom gland.

It localises to the secreted. Functionally, has antimicrobial, insecticidal, cytolytic and cytotoxic activity. This chain is Spiderine-2a, found in Oxyopes takobius (Lynx spider).